A 920-amino-acid polypeptide reads, in one-letter code: Alpha-L-rhamnosidase (920 aa).

The N-terminal stretch at 1–19 (MCVVRTFWFAVLTVIFAVS) is a signal peptide. Cysteine 20 is lipidated: N-palmitoyl cysteine. Cysteine 20 carries S-diacylglycerol cysteine lipidation. Alpha-L-rhamnose-binding positions include aspartate 500, 504 to 506 (RDE), aspartate 513, and tryptophan 565. The active-site Proton donor is glutamate 506. Glutamate 779 functions as the Proton acceptor in the catalytic mechanism. Histidine 800 contributes to the alpha-L-rhamnose binding site.

Belongs to the glycosyl hydrolase 78 family.

Its subcellular location is the cell membrane. It catalyses the reaction Hydrolysis of terminal non-reducing alpha-L-rhamnose residues in alpha-L-rhamnosides.. Functionally, alpha-L-rhamnosidase involved in ulvan degradation. Ulvan is the main polysaccharide component of the Ulvales (green seaweed) cell wall. It is composed of disaccharide building blocks comprising 3-sulfated rhamnose (Rha3S) linked to D-glucuronic acid (GlcA), L-iduronic acid (IduA), or D-xylose (Xyl). The enzyme is able to degrade p-nitrophenyl-alpha-L-rhamnopyranoside (PNP-Rha) in vitro. Incubating the enzyme with the products obtained after degradation with ulvan lyase and beta-glucuronyl hydrolase (i.e. the trisaccharides beta-alpha-L-Rha3S-IduA-Rha3S and beta-alpha-L-Rha3S-GlcA-Rha3S) showed no degradation, suggesting that the enzyme is active on neutral rhamnose and that desulfation of the oligosaccharide must be achieved before cleavage of rhamnose. The sequence is that of Alpha-L-rhamnosidase from Alteromonas sp. (strain LOR).